A 286-amino-acid chain; its full sequence is Protein NipSnap homolog 2 (286 aa).

Residues 1–40 (MATRVLHSSCSGLYRAAGPARGKGHATAVIRSLSASHNRP) constitute a mitochondrion transit peptide.

Belongs to the NipSnap family.

It localises to the mitochondrion matrix. Its function is as follows. Protein involved in mitophagy. Accumulates on the mitochondria surface in response to mitochondrial depolarization and acts as a 'eat me' signal by recruiting proteins involved in selective autophagy. In Danio rerio (Zebrafish), this protein is Protein NipSnap homolog 2 (nipsnap2).